A 119-amino-acid chain; its full sequence is Small ribosomal subunit protein uS17 (119 aa).

Residues 1–21 (MAEAKTGAKATKSAAAGAADG) are compositionally biased toward low complexity. Residues 1-44 (MAEAKTGAKATKSAAAGAADGASKEKGPKHTPSTPKPRGRRKTR) form a disordered region.

The protein belongs to the universal ribosomal protein uS17 family. In terms of assembly, part of the 30S ribosomal subunit.

In terms of biological role, one of the primary rRNA binding proteins, it binds specifically to the 5'-end of 16S ribosomal RNA. This chain is Small ribosomal subunit protein uS17, found in Mycobacterium marinum (strain ATCC BAA-535 / M).